The chain runs to 492 residues: KAT8 regulatory NSL complex subunit 2 (492 aa).

Lys-78 participates in a covalent cross-link: Glycyl lysine isopeptide (Lys-Gly) (interchain with G-Cter in SUMO2). The tract at residues 126–182 (ELGSQTPESSRSEASRILDEDSWSDGEQEPITVDQTWRGDPDSEADSIDRDQEDPLK) is disordered. Thr-131 is modified (phosphothreonine). A compositionally biased stretch (basic and acidic residues) spans 135-144 (SRSEASRILD). Phosphoserine is present on residues Ser-147, Ser-149, Ser-168, and Ser-172. Positions 162-182 (WRGDPDSEADSIDRDQEDPLK) are enriched in basic and acidic residues. The segment at 308-364 (DVRCSNQSLPMTRHCLTHICQDTNRVLFKCCQGSEEVPCNKPVPVSLSEDPCCPLHF) is required for interaction with other NSL complex members. The tract at residues 453–492 (QMAGDGCRSQGPRNSEKAPAPLSQSGIATANGKPEPTSVS) is disordered.

As to quaternary structure, component of the NSL complex at least composed of KAT8/MOF, KANSL1, KANSL2, KANSL3, MCRS1, PHF20, OGT1/OGT, WDR5 and HCFC1. Ubiquitously expressed.

Its subcellular location is the nucleus. The protein localises to the mitochondrion. Non-catalytic component of the NSL histone acetyltransferase complex, a multiprotein complex that mediates histone H4 acetylation at 'Lys-5'- and 'Lys-8' (H4K5ac and H4K8ac) at transcription start sites and promotes transcription initiation. Required for NSL complex stability and for transcription of intraciliary transport genes in both ciliated and non-ciliated cells by regulating histone H4 acetylation at 'Lys-5'- and 'Lys-12' (H4K5ac and H4K12ac). This is necessary for cilium assembly in ciliated cells and for organization of the microtubule cytoskeleton in non-ciliated cells. Required within the NSL complex to maintain nuclear architecture stability by promoting KAT8-mediated acetylation of lamin LMNA. The chain is KAT8 regulatory NSL complex subunit 2 (KANSL2) from Capra hircus (Goat).